Reading from the N-terminus, the 426-residue chain is Serine--tRNA ligase (426 aa).

The tract at residues 36–66 (KRKHLQERTQDLQSQRNTISKEIGQKKAKGE) is disordered. The span at 46-55 (DLQSQRNTIS) shows a compositional bias: polar residues. Position 233-235 (233-235 (TAE)) interacts with L-serine. 264–266 (RSE) serves as a coordination point for ATP. Position 287 (E287) interacts with L-serine. Residue 351-354 (EISS) participates in ATP binding. Residue S387 participates in L-serine binding.

Belongs to the class-II aminoacyl-tRNA synthetase family. Type-1 seryl-tRNA synthetase subfamily. In terms of assembly, homodimer. The tRNA molecule binds across the dimer.

It is found in the cytoplasm. The enzyme catalyses tRNA(Ser) + L-serine + ATP = L-seryl-tRNA(Ser) + AMP + diphosphate + H(+). The catalysed reaction is tRNA(Sec) + L-serine + ATP = L-seryl-tRNA(Sec) + AMP + diphosphate + H(+). Its pathway is aminoacyl-tRNA biosynthesis; selenocysteinyl-tRNA(Sec) biosynthesis; L-seryl-tRNA(Sec) from L-serine and tRNA(Sec): step 1/1. Its function is as follows. Catalyzes the attachment of serine to tRNA(Ser). Is also able to aminoacylate tRNA(Sec) with serine, to form the misacylated tRNA L-seryl-tRNA(Sec), which will be further converted into selenocysteinyl-tRNA(Sec). The polypeptide is Serine--tRNA ligase (Francisella tularensis subsp. tularensis (strain FSC 198)).